We begin with the raw amino-acid sequence, 273 residues long: Putative ABC transporter ATP-binding protein DVU_1056 (273 aa).

The ABC transporter domain maps to leucine 10–glutamate 242. Residue glycine 44–threonine 51 coordinates ATP. Residues histidine 234 to glutamate 273 form a disordered region. Positions histidine 235–histidine 267 are enriched in basic and acidic residues.

This sequence belongs to the ABC transporter superfamily.

It is found in the cell inner membrane. Its function is as follows. Probably part of an ABC transporter complex. Responsible for energy coupling to the transport system. This chain is Putative ABC transporter ATP-binding protein DVU_1056, found in Nitratidesulfovibrio vulgaris (strain ATCC 29579 / DSM 644 / CCUG 34227 / NCIMB 8303 / VKM B-1760 / Hildenborough) (Desulfovibrio vulgaris).